We begin with the raw amino-acid sequence, 273 residues long: Pyridoxal phosphate homeostasis protein (273 aa).

At S6 the chain carries Phosphoserine. N6-(pyridoxal phosphate)lysine is present on K47. Position 69 is a phosphotyrosine (Y69). K125 carries the N6-succinyllysine modification. S226 and S244 each carry phosphoserine. Positions 251–260 are enriched in basic and acidic residues; sequence DYSKKTDKPA. Positions 251–273 are disordered; the sequence is DYSKKTDKPAAELQAPEEVAQAH.

The protein belongs to the pyridoxal phosphate-binding protein YggS/PROSC family.

In terms of biological role, pyridoxal 5'-phosphate (PLP)-binding protein, which may be involved in intracellular homeostatic regulation of pyridoxal 5'-phosphate (PLP), the active form of vitamin B6. In Bos taurus (Bovine), this protein is Pyridoxal phosphate homeostasis protein.